We begin with the raw amino-acid sequence, 776 residues long: Protein SEY1 (776 aa).

The Cytoplasmic segment spans residues 1 to 681; that stretch reads MADRSAIQLI…KRSIITTRTH (681 aa). A GB1/RHD3-type G domain is found at 34–263; the sequence is GLDYHVISVF…TENYYFKPQY (230 aa). GTP is bound at residue 44–51; that stretch reads GSQSSGKS. A helical transmembrane segment spans residues 682-702; it reads IPPWIYVLLAVLGWNEFVAVI. Residues 703 to 705 lie on the Lumenal side of the membrane; sequence RNP. The chain crosses the membrane as a helical span at residues 706–726; that stretch reads LFVTLTLILGATFFVIHKFGL. Residues 727–776 are Cytoplasmic-facing; the sequence is WGPVVNVVQSAVGETRTAIKDKLRQFVVEDHEVKESFEMKDFSKNEQKEK.

The protein belongs to the TRAFAC class dynamin-like GTPase superfamily. GB1/RHD3 GTPase family. RHD3 subfamily. Interacts with RTN1 and YOP1; GTP binding is not required for these interactions.

It is found in the endoplasmic reticulum membrane. Functionally, cooperates with the reticulon proteins RTN1 and RTN2 and the tubule-shaping DP1 family protein YOP1 to generate and maintain the structure of the tubular endoplasmic reticulum network. Has GTPase activity, which is required for its function in ER organization. This is Protein SEY1 from Saccharomyces cerevisiae (strain YJM789) (Baker's yeast).